We begin with the raw amino-acid sequence, 344 residues long: MMNHTTSEYYDYEYDHEHYSDLPDVPVDCPAGTCFTSDVYLIVLLVLYAAVFLVGVPGNTLVAWVTWKESRHRLGASWFLHLTMADLLCCVSLPFLAVPIAQKGHWPYGAAGCWLLSSITILSMYASVLLLTGLSGDLFLLAFRPSWKGADHRTFGVRVVQASSWMLGLLLTVPSAVYRRLLQEHYPPRLVCGIDYGGSVSAEVAITTVRFLFGFLGPLVFMAGCHGILQRQMARRHWPLGTAVVVGFFICWTPYHVLRVIIAAAPPHSLLLARVLEAEPLFNGLALAHSALNPIMFLYFGRKQLCKSLQAACHWALRDPQDEESAVTKVSISTSHEMVSEMPV.

Topologically, residues 1–44 (MMNHTTSEYYDYEYDHEHYSDLPDVPVDCPAGTCFTSDVYLIVL) are extracellular. N3 carries an N-linked (GlcNAc...) asparagine glycan. A helical transmembrane segment spans residues 45 to 67 (LVLYAAVFLVGVPGNTLVAWVTW). Topologically, residues 68-78 (KESRHRLGASW) are cytoplasmic. The helical transmembrane segment at 79-101 (FLHLTMADLLCCVSLPFLAVPIA) threads the bilayer. Residues 102 to 120 (QKGHWPYGAAGCWLLSSIT) are Extracellular-facing. C113 and C192 are disulfide-bonded. The chain crosses the membrane as a helical span at residues 121-143 (ILSMYASVLLLTGLSGDLFLLAF). Over 144 to 155 (RPSWKGADHRTF) the chain is Cytoplasmic. Residues 156–178 (GVRVVQASSWMLGLLLTVPSAVY) traverse the membrane as a helical segment. At 179–208 (RRLLQEHYPPRLVCGIDYGGSVSAEVAITT) the chain is on the extracellular side. Residues 209 to 231 (VRFLFGFLGPLVFMAGCHGILQR) traverse the membrane as a helical segment. At 232–243 (QMARRHWPLGTA) the chain is on the cytoplasmic side. A helical membrane pass occupies residues 244–266 (VVVGFFICWTPYHVLRVIIAAAP). Over 267 to 280 (PHSLLLARVLEAEP) the chain is Extracellular. A helical membrane pass occupies residues 281 to 300 (LFNGLALAHSALNPIMFLYF). At 301–344 (GRKQLCKSLQAACHWALRDPQDEESAVTKVSISTSHEMVSEMPV) the chain is on the cytoplasmic side. Residue S325 is modified to Phosphoserine.

The protein belongs to the G-protein coupled receptor 1 family. In terms of assembly, interacts with C3 (the anaphylatoxin peptide C3a and the adipogenic hormone ASP); the interaction occurs with higher affinity for ASP, enhancing the phosphorylation and activation of GPR77, recruitment of ARRB2 to the cell surface and endocytosis of GRP77. In terms of tissue distribution, highly expressed in liver and spleen. Lower levels in intestine, brain and kidney. Also expressed in adipose tissues with highest levels in gonadal and ingual fat depots. Lower levels in brown tissue.

The protein localises to the cell membrane. Functionally, receptor for the chemotactic and inflammatory C3a, C4a and C5a anaphylatoxin peptides and also for their dearginated forms ASP/C3adesArg, C4adesArg and C5adesArg respectively. Couples weakly to G(i)-mediated signaling pathways. This Mus musculus (Mouse) protein is C5a anaphylatoxin chemotactic receptor 2 (C5ar2).